The sequence spans 660 residues: Bifunctional polymyxin resistance protein ArnA (660 aa).

Residues 1-304 form a formyltransferase ArnAFT region; it reads MKTVVFAYHD…TLGLVQGSRL (304 aa). Residue 86 to 88 coordinates (6R)-10-formyltetrahydrofolate; the sequence is HLI. The active-site Proton donor; for formyltransferase activity is the histidine 104. Residues arginine 114 and 136–140 contribute to the (6R)-10-formyltetrahydrofolate site; that span reads VTRAD. Residues 314–660 are dehydrogenase ArnADH; that stretch reads RRTRVLILGV…RTVDLTDKPS (347 aa). NAD(+)-binding positions include aspartate 347 and 368-369; that span reads DI. Residues alanine 393, tyrosine 398, and 432 to 433 contribute to the UDP-alpha-D-glucuronate site; that span reads TS. The Proton acceptor; for decarboxylase activity role is filled by glutamate 434. Residues arginine 460, asparagine 492, 526–535, and tyrosine 613 each bind UDP-alpha-D-glucuronate; that span reads KLIDGGKQKR. Arginine 619 functions as the Proton donor; for decarboxylase activity in the catalytic mechanism.

It in the N-terminal section; belongs to the Fmt family. UDP-L-Ara4N formyltransferase subfamily. The protein in the C-terminal section; belongs to the NAD(P)-dependent epimerase/dehydratase family. UDP-glucuronic acid decarboxylase subfamily. In terms of assembly, homohexamer, formed by a dimer of trimers.

The enzyme catalyses UDP-alpha-D-glucuronate + NAD(+) = UDP-beta-L-threo-pentopyranos-4-ulose + CO2 + NADH. It carries out the reaction UDP-4-amino-4-deoxy-beta-L-arabinose + (6R)-10-formyltetrahydrofolate = UDP-4-deoxy-4-formamido-beta-L-arabinose + (6S)-5,6,7,8-tetrahydrofolate + H(+). The protein operates within nucleotide-sugar biosynthesis; UDP-4-deoxy-4-formamido-beta-L-arabinose biosynthesis; UDP-4-deoxy-4-formamido-beta-L-arabinose from UDP-alpha-D-glucuronate: step 1/3. It functions in the pathway nucleotide-sugar biosynthesis; UDP-4-deoxy-4-formamido-beta-L-arabinose biosynthesis; UDP-4-deoxy-4-formamido-beta-L-arabinose from UDP-alpha-D-glucuronate: step 3/3. It participates in bacterial outer membrane biogenesis; lipopolysaccharide biosynthesis. Its function is as follows. Bifunctional enzyme that catalyzes the oxidative decarboxylation of UDP-glucuronic acid (UDP-GlcUA) to UDP-4-keto-arabinose (UDP-Ara4O) and the addition of a formyl group to UDP-4-amino-4-deoxy-L-arabinose (UDP-L-Ara4N) to form UDP-L-4-formamido-arabinose (UDP-L-Ara4FN). The modified arabinose is attached to lipid A and is required for resistance to polymyxin and cationic antimicrobial peptides. The polypeptide is Bifunctional polymyxin resistance protein ArnA (Shigella dysenteriae serotype 1 (strain Sd197)).